The sequence spans 271 residues: Uridine-cytidine kinase 1-A (271 aa).

24–32 (GGTASGKST) provides a ligand contact to ATP. Substrate-binding residues include D81, Y109, H114, R163, R172, and Q180. Position 209 (D209) interacts with ATP. A disordered region spans residues 241–271 (SQKRTFPGQGESGGLILPGKRTHLESSSRPH). A compositionally biased stretch (basic and acidic residues) spans 262 to 271 (THLESSSRPH).

Belongs to the uridine kinase family.

The catalysed reaction is uridine + ATP = UMP + ADP + H(+). The enzyme catalyses cytidine + ATP = CMP + ADP + H(+). Its pathway is pyrimidine metabolism; CTP biosynthesis via salvage pathway; CTP from cytidine: step 1/3. It participates in pyrimidine metabolism; UMP biosynthesis via salvage pathway; UMP from uridine: step 1/1. Its function is as follows. Phosphorylates uridine and cytidine to uridine monophosphate and cytidine monophosphate. Does not phosphorylate deoxyribonucleosides or purine ribonucleosides. Can use ATP or GTP as a phosphate donor. In Xenopus laevis (African clawed frog), this protein is Uridine-cytidine kinase 1-A (uck1-a).